We begin with the raw amino-acid sequence, 234 residues long: Probable transcriptional regulatory protein Pfl01_3677 (234 aa).

It belongs to the TACO1 family.

The protein localises to the cytoplasm. This Pseudomonas fluorescens (strain Pf0-1) protein is Probable transcriptional regulatory protein Pfl01_3677.